Reading from the N-terminus, the 197-residue chain is Phospholipid hydroperoxide glutathione peroxidase GPX4 (197 aa).

Ser-40 bears the Phosphoserine mark. Residue Sec-73 is part of the active site. Sec-73 is a non-standard amino acid (selenocysteine).

This sequence belongs to the glutathione peroxidase family. In terms of assembly, monomer. Has a tendency to form higher mass oligomers. Interacts with FUNDC1; this interaction promotes GPX4 recruitment into mitochondria through TOM/TIM complex where it is degraded by mitophagy. As to expression, widely expressed with the highest levels in testis, heart, cerebrum, ileum, stomach, liver, jejunum and epididymis. Expressed primarily in testis and sperm midpiece (at protein level). Expressed in brain (at protein level). Expressed in heart, liver and kidney (at protein level). Expressed in retina, especially in inner segments of photoreceptor cells (at protein level). In terms of tissue distribution, highly expressed during embryogenesis. Down-regulated between 14.5 dpc and 17.5 dpc. Highly expressed during embryogenesis. In contrast to isoform Mitochondrial and isoform Nuclear, which are down-regulated between 14.5 dpc and 17.5 dpc, remains constant. As to expression, mainly expressed in sperm. Weakly expressed during embryogenesis. Down-regulated between 14.5 dpc and 17.5 dpc.

It localises to the mitochondrion. Its subcellular location is the cytoplasm. It is found in the nucleus. It carries out the reaction a hydroperoxy polyunsaturated fatty acid + 2 glutathione = a hydroxy polyunsaturated fatty acid + glutathione disulfide + H2O. The enzyme catalyses 2 glutathione + H2O2 = glutathione disulfide + 2 H2O. It catalyses the reaction tert-butyl hydroperoxide + 2 glutathione = tert-butanol + glutathione disulfide + H2O. The catalysed reaction is cumene hydroperoxide + 2 glutathione = 2-phenylpropan-2-ol + glutathione disulfide + H2O. It carries out the reaction (9S)-hydroperoxy-(10E,12Z)-octadecadienoate + 2 glutathione = (9S)-hydroxy-(10E,12Z)-octadecadienoate + glutathione disulfide + H2O. The enzyme catalyses (13S)-hydroperoxy-(9Z,11E)-octadecadienoate + 2 glutathione = (13S)-hydroxy-(9Z,11E)-octadecadienoate + glutathione disulfide + H2O. It catalyses the reaction (5S)-hydroperoxy-(6E,8Z,11Z,14Z)-eicosatetraenoate + 2 glutathione = (5S)-hydroxy-(6E,8Z,11Z,14Z)-eicosatetraenoate + glutathione disulfide + H2O. The catalysed reaction is (12R)-hydroperoxy-(5Z,8Z,10E,14Z)-eicosatetraenoate + 2 glutathione = (12R)-hydroxy-(5Z,8Z,10E,14Z)-eicosatetraenoate + glutathione disulfide + H2O. It carries out the reaction (12S)-hydroperoxy-(5Z,8Z,10E,14Z)-eicosatetraenoate + 2 glutathione = (12S)-hydroxy-(5Z,8Z,10E,14Z)-eicosatetraenoate + glutathione disulfide + H2O. The enzyme catalyses (15S)-hydroperoxy-(5Z,8Z,11Z,13E)-eicosatetraenoate + 2 glutathione = (15S)-hydroxy-(5Z,8Z,11Z,13E)-eicosatetraenoate + glutathione disulfide + H2O. It catalyses the reaction (5S)-hydroperoxy-(6E,8Z,11Z,14Z,17Z)-eicosapentaenoate + 2 glutathione = (5S)-hydroxy-(6E,8Z,11Z,14Z,17Z)-eicosapentaenoate + glutathione disulfide + H2O. The catalysed reaction is (12S)-hydroperoxy-(5Z,8Z,10E,14Z,17Z)-eicosapentaenoate + 2 glutathione = (12S)-hydroxy-(5Z,8Z,10E,14Z,17Z)-eicosapentaenoate + glutathione disulfide + H2O. It carries out the reaction (15S)-hydroperoxy-(5Z,8Z,11Z,13E,17Z)-eicosapentaenoate + 2 glutathione = (15S)-hydroxy-(5Z,8Z,11Z,13E,17Z)-eicosapentaenoate + glutathione disulfide + H2O. The enzyme catalyses (15S)-hydroperoxy-(11Z,13E)-eicosadienoate + 2 glutathione = (15S)-hydroxy-(11Z,13E)-eicosadienoate + glutathione disulfide + H2O. It catalyses the reaction (17S)-hydroperoxy-(4Z,7Z,10Z,13Z,15E,19Z)-docosahexaenoate + 2 glutathione = (17S)-hydroxy-(4Z,7Z,10Z,13Z,15E,19Z)-docosahexaenoate + glutathione disulfide + H2O. The catalysed reaction is a hydroperoxy-1,2-diacyl-glycero-3-phosphocholine + 2 glutathione = a hydroxy-1,2-diacyl-glycero-3-phosphocholine + glutathione disulfide + H2O. Its function is as follows. Essential antioxidant peroxidase that directly reduces phospholipid hydroperoxide even if they are incorporated in membranes and lipoproteins. Can also reduce fatty acid hydroperoxide, cholesterol hydroperoxide and thymine hydroperoxide. Plays a key role in protecting cells from oxidative damage by preventing membrane lipid peroxidation. Required to prevent cells from ferroptosis, a non-apoptotic cell death resulting from an iron-dependent accumulation of lipid reactive oxygen species. The presence of selenocysteine (Sec) versus Cys at the active site is essential for life: it provides resistance to overoxidation and prevents cells against ferroptosis. The presence of Sec at the active site is also essential for the survival of a specific type of parvalbumin-positive interneurons, thereby preventing against fatal epileptic seizures. May be required to protect cells from the toxicity of ingested lipid hydroperoxides. Required for normal sperm development and male fertility. Essential for maturation and survival of photoreceptor cells. Plays a role in a primary T-cell response to viral and parasitic infection by protecting T-cells from ferroptosis and by supporting T-cell expansion. Plays a role of glutathione peroxidase in platelets in the arachidonic acid metabolism. Reduces hydroperoxy ester lipids formed by a 15-lipoxygenase that may play a role as down-regulator of the cellular 15-lipoxygenase pathway. Can also reduce small soluble hydroperoxides such as H2O2 and tert-butyl hydroperoxide. In terms of biological role, specifically able to suppress the production of leukotriene and prostaglandin in response to several stimuli by reducing fatty acid hydroperoxide. Specifically required to prevent mitochondrial cell death by mediating reduction of cardiolipin hydroperoxide. Also required for normal sperm development and male fertility. Functionally, required for male fertility by stabilizing the condensed chromatin in sperm nuclei. The polypeptide is Phospholipid hydroperoxide glutathione peroxidase GPX4 (Mus musculus (Mouse)).